Consider the following 105-residue polypeptide: Putative RNA-binding protein RbpF (105 aa).

Residues 2-79 (SIYVGNLSYE…RDLKVNKAKP (78 aa)) enclose the RRM domain. The span at 75-84 (NKAKPKEDRG) shows a compositional bias: basic and acidic residues. The segment at 75-105 (NKAKPKEDRGSFGGGNRGGYGGGGGGGRSRY) is disordered. Residues 85 to 105 (SFGGGNRGGYGGGGGGGRSRY) are compositionally biased toward gly residues.

This Nostoc sp. (strain PCC 7120 / SAG 25.82 / UTEX 2576) protein is Putative RNA-binding protein RbpF (rbpF).